Reading from the N-terminus, the 299-residue chain is uncharacterized protein (299 aa).

Residues 1-10 (MTSIIQSPPL) are compositionally biased toward polar residues. 3 disordered regions span residues 1 to 30 (MTSI…NNNN), 54 to 89 (KLNN…INNN), and 148 to 212 (QDYT…SDYV). Low complexity predominate over residues 56 to 89 (NNNNNNNNNNNNNNNNNNNNNNNNSSSNNNINNN). 2 stretches are compositionally biased toward acidic residues: residues 150-169 (YTDE…DEEE) and 177-212 (ECEE…SDYV).

This is an uncharacterized protein from Dictyostelium discoideum (Social amoeba).